A 97-amino-acid chain; its full sequence is Conotoxin Cal6.1a (97 aa).

Residues 1–22 form the signal peptide; it reads MKLTTVLVVALLVLAACQFTVT. The tract at residues 23–46 is disordered; it reads DNSGDDPENPSLRSVGENQNPDST. Positions 23–68 are excised as a propeptide; it reads DNSGDDPENPSLRSVGENQNPDSTKTITAWATRDMTNMRRGLNRPS. Cystine bridges form between Cys-71-Cys-87, Cys-78-Cys-91, and Cys-86-Cys-96.

Belongs to the conotoxin O1 superfamily. As to expression, expressed by the venom duct.

Its subcellular location is the secreted. Probable neurotoxin with unknown target. Possibly targets ion channels. The sequence is that of Conotoxin Cal6.1a from Californiconus californicus (California cone).